The following is a 192-amino-acid chain: Charged multivesicular body protein 1 (192 aa).

Coiled-coil stretches lie at residues 7-35 and 102-125; these read QLKFTSKQLEKQSKKSEQSEKAQKIKLKK and NMDLEKITQVMDQFERQFEDLDVQ. The tract at residues 164–192 is disordered; sequence QMGSAPSEKVQQGETDELTERLNRLKQKN.

The protein belongs to the SNF7 family. In terms of assembly, probable peripherally associated component of the endosomal sorting required for transport complex III (ESCRT-III).

The protein localises to the endosome membrane. Functionally, probable peripherally associated component of the endosomal sorting required for transport complex III (ESCRT-III) which is involved in multivesicular bodies (MVBs) formation and sorting of endosomal cargo proteins into MVBs. MVBs contain intraluminal vesicles (ILVs) that are generated by invagination and scission from the limiting membrane of the endosome and are delivered to lysosomes enabling degradation of membrane proteins. This chain is Charged multivesicular body protein 1 (chmp1), found in Dictyostelium discoideum (Social amoeba).